A 244-amino-acid chain; its full sequence is uncharacterized protein (244 aa).

Belongs to the MtxX family.

This is an uncharacterized protein from Methanocaldococcus jannaschii (strain ATCC 43067 / DSM 2661 / JAL-1 / JCM 10045 / NBRC 100440) (Methanococcus jannaschii).